The sequence spans 441 residues: Trigger factor (441 aa).

The PPIase FKBP-type domain occupies 161 to 246 (GDKVTIDFLG…VHEVLGEKLP (86 aa)).

This sequence belongs to the FKBP-type PPIase family. Tig subfamily.

The protein resides in the cytoplasm. It carries out the reaction [protein]-peptidylproline (omega=180) = [protein]-peptidylproline (omega=0). Involved in protein export. Acts as a chaperone by maintaining the newly synthesized protein in an open conformation. Functions as a peptidyl-prolyl cis-trans isomerase. This chain is Trigger factor, found in Teredinibacter turnerae (strain ATCC 39867 / T7901).